We begin with the raw amino-acid sequence, 880 residues long: Zinc-responsive transcriptional regulator ZAP1 (880 aa).

2 disordered regions span residues 1–26 (MDAL…AASA) and 140–164 (NNFH…PRRK). Residues 17-26 (ATSAATAASA) show a composition bias toward low complexity. The segment covering 147 to 158 (SDPTSPQQNSKS) has biased composition (polar residues). 2 positions are modified to phosphoserine: Ser156 and Ser166. A zinc-responsive domain 1 (ZRD(AD1)) region spans residues 182-502 (KPNPPPGSDD…LTNNDLNDLI (321 aa)). Positions 207–402 (HPKSEANIKQ…YEVPFGKHIN (196 aa)) are transcription activation domain 1 (AD1). Disordered stretches follow at residues 436–482 (NRCN…VNNS) and 510–555 (RFRN…PSSI). The segment covering 442 to 456 (NNLNGSNNNTAGATS) has biased composition (low complexity). Positions 460-474 (QHHHHRIQFHSHKPN) are enriched in basic residues. Ser515 bears the Phosphoserine mark. Over residues 545–555 (SSLEDSLPSSI) the composition is skewed to low complexity. The segment at 579-604 (LKCKWKECPESCSSLFDLQRHLLKDH) adopts a C2H2-type 1 zinc-finger fold. The tract at residues 579 to 641 (LKCKWKECPE…SIVNHINCQH (63 aa)) is zinc-responsive domain 2 (ZRD(AD2)). Zn(2+) is bound by residues Cys581, Cys586, His599, His604, Cys618, Cys623, His636, and His641. Residues 611-640 (HPMEPLACNWEDCDFLGDDTCSIVNHINCQ) form a transcription activation domain 2 (AD2) region. The C2H2-type 2; atypical zinc finger occupies 616 to 641 (LACNWEDCDFLGDDTCSIVNHINCQH). 5 consecutive C2H2-type zinc fingers follow at residues 705 to 730 (VICQ…EAVH), 738 to 762 (YQCL…LKVH), 768 to 790 (YKCK…TRTH), 796 to 818 (YKCH…IRTH), and 824 to 846 (LQCK…IKTH). A DNA-binding region (DNA-binding domain) is located at residues 705 to 846 (VICQWDGCNK…SNLSKHIKTH (142 aa)).

It is found in the nucleus. Its activity is regulated as follows. Active in zinc-limited cells and repressed in replete cells. Zinc controls ZAP1 DNA binding activity. In terms of biological role, transcription regulator controlling zinc-responsive gene expression. Binds to zinc-responsive elements (ZREs) (consensus sequence 5'-ACCYYNAAGGT-3') in the promoter of target genes. Recruits SWI/SNF, SAGA, and Mediator complexes as coactivators in a zinc-responsive manner. Involved in zinc ion homeostasis by zinc-responsive transcriptional regulation of the zinc uptake system genes ZTR1 and ZTR2. Positively regulates ETR1 expression, affecting mitochondrial function. This Saccharomyces cerevisiae (strain ATCC 204508 / S288c) (Baker's yeast) protein is Zinc-responsive transcriptional regulator ZAP1 (ZAP1).